The primary structure comprises 261 residues: Cytochrome c oxidase subunit 3 (261 aa).

At 1–15 the chain is on the mitochondrial matrix side; that stretch reads MTHQTHAYHMVNPSP. A helical membrane pass occupies residues 16–34; that stretch reads WPLTGALSALLMTSGLIMW. Over 35 to 40 the chain is Mitochondrial intermembrane; it reads FHFNST. A helical membrane pass occupies residues 41–66; that stretch reads ILLMLGLTTNMLTMYQWWRDIIREST. Topologically, residues 67-72 are mitochondrial matrix; that stretch reads FQGHHT. Residues 73–105 form a helical membrane-spanning segment; that stretch reads PTVQKGLRYGMILFIISEVLFFTGFFWAFYHSS. At 106-128 the chain is on the mitochondrial intermembrane side; it reads LAPTPELGGCWPPTGIHPLNPLE. The helical transmembrane segment at 129 to 152 threads the bilayer; sequence VPLLNTSVLLASGVSITWAHHSLM. At 153-155 the chain is on the mitochondrial matrix side; that stretch reads EGN. The helical transmembrane segment at 156-183 threads the bilayer; the sequence is RNHMLQALFITIALGVYFTLLQASEYYE. Residues 184 to 190 lie on the Mitochondrial intermembrane side of the membrane; the sequence is APFTISD. The helical transmembrane segment at 191–223 threads the bilayer; sequence GVYGSTFFVATGFHGLHVIIGSTFLIVCFFRQL. The Mitochondrial matrix portion of the chain corresponds to 224–232; that stretch reads KFHFTSSHH. The helical transmembrane segment at 233–256 threads the bilayer; the sequence is FGFEAAAWYWHFVDVVWLFLYVSI. Residues 257-261 lie on the Mitochondrial intermembrane side of the membrane; sequence YWWGS.

The protein belongs to the cytochrome c oxidase subunit 3 family. Component of the cytochrome c oxidase (complex IV, CIV), a multisubunit enzyme composed of 14 subunits. The complex is composed of a catalytic core of 3 subunits MT-CO1, MT-CO2 and MT-CO3, encoded in the mitochondrial DNA, and 11 supernumerary subunits COX4I, COX5A, COX5B, COX6A, COX6B, COX6C, COX7A, COX7B, COX7C, COX8 and NDUFA4, which are encoded in the nuclear genome. The complex exists as a monomer or a dimer and forms supercomplexes (SCs) in the inner mitochondrial membrane with NADH-ubiquinone oxidoreductase (complex I, CI) and ubiquinol-cytochrome c oxidoreductase (cytochrome b-c1 complex, complex III, CIII), resulting in different assemblies (supercomplex SCI(1)III(2)IV(1) and megacomplex MCI(2)III(2)IV(2)).

It is found in the mitochondrion inner membrane. It carries out the reaction 4 Fe(II)-[cytochrome c] + O2 + 8 H(+)(in) = 4 Fe(III)-[cytochrome c] + 2 H2O + 4 H(+)(out). In terms of biological role, component of the cytochrome c oxidase, the last enzyme in the mitochondrial electron transport chain which drives oxidative phosphorylation. The respiratory chain contains 3 multisubunit complexes succinate dehydrogenase (complex II, CII), ubiquinol-cytochrome c oxidoreductase (cytochrome b-c1 complex, complex III, CIII) and cytochrome c oxidase (complex IV, CIV), that cooperate to transfer electrons derived from NADH and succinate to molecular oxygen, creating an electrochemical gradient over the inner membrane that drives transmembrane transport and the ATP synthase. Cytochrome c oxidase is the component of the respiratory chain that catalyzes the reduction of oxygen to water. Electrons originating from reduced cytochrome c in the intermembrane space (IMS) are transferred via the dinuclear copper A center (CU(A)) of subunit 2 and heme A of subunit 1 to the active site in subunit 1, a binuclear center (BNC) formed by heme A3 and copper B (CU(B)). The BNC reduces molecular oxygen to 2 water molecules using 4 electrons from cytochrome c in the IMS and 4 protons from the mitochondrial matrix. This Aepyceros melampus (Impala) protein is Cytochrome c oxidase subunit 3 (MT-CO3).